The primary structure comprises 817 residues: Transcription factor yanR (817 aa).

Residues 19-46 (CIVCRRRKVRCGREHPECANCVRMKENC) constitute a DNA-binding region (zn(2)-C6 fungal-type). 3 disordered regions span residues 102 to 161 (GNVL…PQVD), 180 to 218 (HHAS…YSGL), and 733 to 775 (SLSS…VADS). Over residues 113-127 (LPRPTISPASAPPPQ) the composition is skewed to pro residues. A compositionally biased stretch (polar residues) spans 146–158 (SSTILTPAPSSHP). The segment covering 184–195 (SRAGTSRTSSVS) has biased composition (low complexity). Composition is skewed to polar residues over residues 208-217 (APSTSTSYSG) and 748-760 (EAPS…QMPS).

Its subcellular location is the nucleus. Functionally, transcription factor that regulates the expression of the gene cluster that mediates the biosynthesis of yanuthone D, a fungal isoprenoid epoxycyclohexenone that acts as an antibiotic against fungi and bacteria. The sequence is that of Transcription factor yanR from Aspergillus niger (strain ATCC 1015 / CBS 113.46 / FGSC A1144 / LSHB Ac4 / NCTC 3858a / NRRL 328 / USDA 3528.7).